The sequence spans 313 residues: Endo-beta-N-acetylglucosaminidase H (313 aa).

The segment at residues 1-42 (MFTPVRRRVRTAALALSAAAALVLGSTAASGASATPSPAPAP) is a signal peptide (or 44). The GH18 domain occupies 51–307 (PTSVAYVEVN…SAFTRELYGS (257 aa)). The active-site Proton donor is glutamate 174.

Belongs to the glycosyl hydrolase 18 family.

It carries out the reaction an N(4)-(oligosaccharide-(1-&gt;3)-[oligosaccharide-(1-&gt;6)]-beta-D-Man-(1-&gt;4)-beta-D-GlcNAc-(1-&gt;4)-alpha-D-GlcNAc)-L-asparaginyl-[protein] + H2O = an oligosaccharide-(1-&gt;3)-[oligosaccharide-(1-&gt;6)]-beta-D-Man-(1-&gt;4)-D-GlcNAc + N(4)-(N-acetyl-beta-D-glucosaminyl)-L-asparaginyl-[protein]. Its function is as follows. Cleaves asparagine-linked oligomannose and hybrid, but not complex, oligosaccharides from glycoproteins. The chain is Endo-beta-N-acetylglucosaminidase H from Streptomyces plicatus.